Consider the following 219-residue polypeptide: Ribose-5-phosphate isomerase A (219 aa).

Substrate is bound by residues 28 to 31 (TGST), 81 to 84 (DGAD), and 94 to 97 (KGGG). E103 acts as the Proton acceptor in catalysis. K121 lines the substrate pocket.

This sequence belongs to the ribose 5-phosphate isomerase family. In terms of assembly, homodimer.

It carries out the reaction aldehydo-D-ribose 5-phosphate = D-ribulose 5-phosphate. It participates in carbohydrate degradation; pentose phosphate pathway; D-ribose 5-phosphate from D-ribulose 5-phosphate (non-oxidative stage): step 1/1. Its function is as follows. Catalyzes the reversible conversion of ribose-5-phosphate to ribulose 5-phosphate. This Acidithiobacillus ferrooxidans (strain ATCC 23270 / DSM 14882 / CIP 104768 / NCIMB 8455) (Ferrobacillus ferrooxidans (strain ATCC 23270)) protein is Ribose-5-phosphate isomerase A.